A 322-amino-acid polypeptide reads, in one-letter code: 4-hydroxy-3-methylbut-2-enyl diphosphate reductase (322 aa).

Cysteine 15 provides a ligand contact to [4Fe-4S] cluster. Residues histidine 44 and histidine 77 each coordinate (2E)-4-hydroxy-3-methylbut-2-enyl diphosphate. Positions 44 and 77 each coordinate dimethylallyl diphosphate. Histidine 44 and histidine 77 together coordinate isopentenyl diphosphate. Cysteine 99 contributes to the [4Fe-4S] cluster binding site. Histidine 127 provides a ligand contact to (2E)-4-hydroxy-3-methylbut-2-enyl diphosphate. Position 127 (histidine 127) interacts with dimethylallyl diphosphate. Histidine 127 is an isopentenyl diphosphate binding site. Glutamate 129 (proton donor) is an active-site residue. Threonine 168 contributes to the (2E)-4-hydroxy-3-methylbut-2-enyl diphosphate binding site. Cysteine 198 contacts [4Fe-4S] cluster. Serine 226, serine 227, asparagine 228, and serine 270 together coordinate (2E)-4-hydroxy-3-methylbut-2-enyl diphosphate. Positions 226, 227, 228, and 270 each coordinate dimethylallyl diphosphate. Isopentenyl diphosphate is bound by residues serine 226, serine 227, asparagine 228, and serine 270.

The protein belongs to the IspH family. The cofactor is [4Fe-4S] cluster.

It carries out the reaction isopentenyl diphosphate + 2 oxidized [2Fe-2S]-[ferredoxin] + H2O = (2E)-4-hydroxy-3-methylbut-2-enyl diphosphate + 2 reduced [2Fe-2S]-[ferredoxin] + 2 H(+). It catalyses the reaction dimethylallyl diphosphate + 2 oxidized [2Fe-2S]-[ferredoxin] + H2O = (2E)-4-hydroxy-3-methylbut-2-enyl diphosphate + 2 reduced [2Fe-2S]-[ferredoxin] + 2 H(+). Its pathway is isoprenoid biosynthesis; dimethylallyl diphosphate biosynthesis; dimethylallyl diphosphate from (2E)-4-hydroxy-3-methylbutenyl diphosphate: step 1/1. It functions in the pathway isoprenoid biosynthesis; isopentenyl diphosphate biosynthesis via DXP pathway; isopentenyl diphosphate from 1-deoxy-D-xylulose 5-phosphate: step 6/6. Functionally, catalyzes the conversion of 1-hydroxy-2-methyl-2-(E)-butenyl 4-diphosphate (HMBPP) into a mixture of isopentenyl diphosphate (IPP) and dimethylallyl diphosphate (DMAPP). Acts in the terminal step of the DOXP/MEP pathway for isoprenoid precursor biosynthesis. The chain is 4-hydroxy-3-methylbut-2-enyl diphosphate reductase from Neisseria gonorrhoeae (strain ATCC 700825 / FA 1090).